Here is a 122-residue protein sequence, read N- to C-terminus: Large ribosomal subunit protein uL14 (122 aa).

This sequence belongs to the universal ribosomal protein uL14 family. Part of the 50S ribosomal subunit. Forms a cluster with proteins L3 and L19. In the 70S ribosome, L14 and L19 interact and together make contacts with the 16S rRNA in bridges B5 and B8.

Its function is as follows. Binds to 23S rRNA. Forms part of two intersubunit bridges in the 70S ribosome. The sequence is that of Large ribosomal subunit protein uL14 from Janthinobacterium sp. (strain Marseille) (Minibacterium massiliensis).